Reading from the N-terminus, the 224-residue chain is tRNA (guanine-N(7)-)-methyltransferase (224 aa).

Residues Glu-54, Glu-79, and Asp-129 each contribute to the S-adenosyl-L-methionine site. Asp-129 is a catalytic residue. Residues Lys-133 and Asp-165 each coordinate substrate.

The protein belongs to the class I-like SAM-binding methyltransferase superfamily. TrmB family.

The enzyme catalyses guanosine(46) in tRNA + S-adenosyl-L-methionine = N(7)-methylguanosine(46) in tRNA + S-adenosyl-L-homocysteine. It functions in the pathway tRNA modification; N(7)-methylguanine-tRNA biosynthesis. In terms of biological role, catalyzes the formation of N(7)-methylguanine at position 46 (m7G46) in tRNA. The polypeptide is tRNA (guanine-N(7)-)-methyltransferase (Chlamydia pneumoniae (Chlamydophila pneumoniae)).